We begin with the raw amino-acid sequence, 116 residues long: Large ribosomal subunit protein eL22B (116 aa).

This sequence belongs to the eukaryotic ribosomal protein eL22 family.

This Dictyostelium discoideum (Social amoeba) protein is Large ribosomal subunit protein eL22B (rpl22a).